The primary structure comprises 128 residues: Large ribosomal subunit protein uL22 (128 aa).

Residues M1–R20 are disordered. A compositionally biased stretch (basic and acidic residues) spans I9–R20.

It belongs to the universal ribosomal protein uL22 family. In terms of assembly, part of the 50S ribosomal subunit.

Functionally, this protein binds specifically to 23S rRNA; its binding is stimulated by other ribosomal proteins, e.g. L4, L17, and L20. It is important during the early stages of 50S assembly. It makes multiple contacts with different domains of the 23S rRNA in the assembled 50S subunit and ribosome. In terms of biological role, the globular domain of the protein is located near the polypeptide exit tunnel on the outside of the subunit, while an extended beta-hairpin is found that lines the wall of the exit tunnel in the center of the 70S ribosome. The sequence is that of Large ribosomal subunit protein uL22 from Lachnospira eligens (strain ATCC 27750 / DSM 3376 / VPI C15-48 / C15-B4) (Eubacterium eligens).